A 361-amino-acid chain; its full sequence is Phosphoserine aminotransferase (361 aa).

Residue Arg-43 coordinates L-glutamate. Pyridoxal 5'-phosphate is bound by residues 77–78 (AS), Trp-103, Thr-153, Asp-172, and Gln-195. The residue at position 196 (Lys-196) is an N6-(pyridoxal phosphate)lysine. Residue 237–238 (NT) coordinates pyridoxal 5'-phosphate.

This sequence belongs to the class-V pyridoxal-phosphate-dependent aminotransferase family. SerC subfamily. As to quaternary structure, homodimer. The cofactor is pyridoxal 5'-phosphate.

The protein localises to the cytoplasm. It carries out the reaction O-phospho-L-serine + 2-oxoglutarate = 3-phosphooxypyruvate + L-glutamate. The catalysed reaction is 4-(phosphooxy)-L-threonine + 2-oxoglutarate = (R)-3-hydroxy-2-oxo-4-phosphooxybutanoate + L-glutamate. It functions in the pathway amino-acid biosynthesis; L-serine biosynthesis; L-serine from 3-phospho-D-glycerate: step 2/3. It participates in cofactor biosynthesis; pyridoxine 5'-phosphate biosynthesis; pyridoxine 5'-phosphate from D-erythrose 4-phosphate: step 3/5. In terms of biological role, catalyzes the reversible conversion of 3-phosphohydroxypyruvate to phosphoserine and of 3-hydroxy-2-oxo-4-phosphonooxybutanoate to phosphohydroxythreonine. In Desulfotalea psychrophila (strain LSv54 / DSM 12343), this protein is Phosphoserine aminotransferase.